A 450-amino-acid polypeptide reads, in one-letter code: uncharacterized protein (450 aa).

Lys283 is subject to N6-(pyridoxal phosphate)lysine.

This sequence belongs to the class-III pyridoxal-phosphate-dependent aminotransferase family. It depends on pyridoxal 5'-phosphate as a cofactor.

In terms of biological role, essential for glycerol catabolism. This is an uncharacterized protein from Bacillus subtilis (strain 168).